The primary structure comprises 336 residues: Pyridoxal 5'-phosphate synthase subunit PdxS (336 aa).

Asp64 lines the D-ribose 5-phosphate pocket. The active-site Schiff-base intermediate with D-ribose 5-phosphate is Lys121. Gly193 contacts D-ribose 5-phosphate. Lys205 contacts D-glyceraldehyde 3-phosphate. D-ribose 5-phosphate is bound by residues Gly254 and 275–276 (GS).

It belongs to the PdxS/SNZ family. As to quaternary structure, in the presence of PdxT, forms a dodecamer of heterodimers.

It carries out the reaction aldehydo-D-ribose 5-phosphate + D-glyceraldehyde 3-phosphate + L-glutamine = pyridoxal 5'-phosphate + L-glutamate + phosphate + 3 H2O + H(+). The protein operates within cofactor biosynthesis; pyridoxal 5'-phosphate biosynthesis. Catalyzes the formation of pyridoxal 5'-phosphate from ribose 5-phosphate (RBP), glyceraldehyde 3-phosphate (G3P) and ammonia. The ammonia is provided by the PdxT subunit. Can also use ribulose 5-phosphate and dihydroxyacetone phosphate as substrates, resulting from enzyme-catalyzed isomerization of RBP and G3P, respectively. The sequence is that of Pyridoxal 5'-phosphate synthase subunit PdxS from Pyrobaculum aerophilum (strain ATCC 51768 / DSM 7523 / JCM 9630 / CIP 104966 / NBRC 100827 / IM2).